Consider the following 319-residue polypeptide: Ribonucleoside-diphosphate reductase small chain (319 aa).

Fe cation contacts are provided by D70, E101, and H104. Y108 is a catalytic residue. Fe cation contacts are provided by E163, E197, and H200. The interaction with R1 stretch occupies residues 313–319 (FSLDVDF).

Belongs to the ribonucleoside diphosphate reductase small chain family. As to quaternary structure, interacts with RNR1/OPG080 subunit. Can interact with host RNR1 supunit. It depends on Fe cation as a cofactor.

It catalyses the reaction a 2'-deoxyribonucleoside 5'-diphosphate + [thioredoxin]-disulfide + H2O = a ribonucleoside 5'-diphosphate + [thioredoxin]-dithiol. Functionally, ribonucleoside-diphosphate reductase holoenzyme provides the precursors necessary for viral DNA synthesis. Allows virus growth in non-dividing cells. Catalyzes the biosynthesis of deoxyribonucleotides from the corresponding ribonucleotides. This is Ribonucleoside-diphosphate reductase small chain (OPG048) from Vaccinia virus (strain L-IVP) (VACV).